The following is a 469-amino-acid chain: Citrate synthase, mitochondrial (469 aa).

Residues 1 to 30 constitute a mitochondrion transit peptide; the sequence is MSFLSVSRLAPKLLNSKNATYFLVAARNAS. Catalysis depends on residues H304 and H350. Residue R359 participates in oxaloacetate binding. D405 is a catalytic residue. Oxaloacetate-binding residues include R431 and R451.

The protein belongs to the citrate synthase family. In terms of assembly, homodimer.

Its subcellular location is the mitochondrion matrix. It catalyses the reaction oxaloacetate + acetyl-CoA + H2O = citrate + CoA + H(+). It functions in the pathway carbohydrate metabolism; tricarboxylic acid cycle; isocitrate from oxaloacetate: step 1/2. Key enzyme of the Krebs tricarboxylic acid cycle which catalyzes the synthesis of citrate from acetyl coenzyme A and oxaloacetate. This chain is Citrate synthase, mitochondrial (cs), found in Katsuwonus pelamis (Skipjack tuna).